We begin with the raw amino-acid sequence, 127 residues long: Small ribosomal subunit protein uS12 (127 aa).

D89 bears the 3-methylthioaspartic acid mark.

This sequence belongs to the universal ribosomal protein uS12 family. Part of the 30S ribosomal subunit. Contacts proteins S8 and S17. May interact with IF1 in the 30S initiation complex.

In terms of biological role, with S4 and S5 plays an important role in translational accuracy. Interacts with and stabilizes bases of the 16S rRNA that are involved in tRNA selection in the A site and with the mRNA backbone. Located at the interface of the 30S and 50S subunits, it traverses the body of the 30S subunit contacting proteins on the other side and probably holding the rRNA structure together. The combined cluster of proteins S8, S12 and S17 appears to hold together the shoulder and platform of the 30S subunit. The chain is Small ribosomal subunit protein uS12 from Aliarcobacter butzleri (strain RM4018) (Arcobacter butzleri).